Here is a 446-residue protein sequence, read N- to C-terminus: Tubulin alpha chain-like 3 (446 aa).

The MREC motif signature appears at Met1–Cys4. GTP-binding residues include Gln11, Glu78, Ser147, Gly151, Thr152, Thr186, Asn213, and Asn235. Glu78 contributes to the Mg(2+) binding site. Glu261 is a catalytic residue.

It belongs to the tubulin family. Dimer of alpha and beta chains. A typical microtubule is a hollow water-filled tube with an outer diameter of 25 nm and an inner diameter of 15 nM. Alpha-beta heterodimers associate head-to-tail to form protofilaments running lengthwise along the microtubule wall with the beta-tubulin subunit facing the microtubule plus end conferring a structural polarity. Microtubules usually have 13 protofilaments but different protofilament numbers can be found in some organisms and specialized cells. It depends on Mg(2+) as a cofactor. Some glutamate residues at the C-terminus are polyglutamylated, resulting in polyglutamate chains on the gamma-carboxyl group. Polyglutamylation plays a key role in microtubule severing by spastin (SPAST). SPAST preferentially recognizes and acts on microtubules decorated with short polyglutamate tails: severing activity by SPAST increases as the number of glutamates per tubulin rises from one to eight, but decreases beyond this glutamylation threshold. Glutamylation is also involved in cilia motility. In terms of processing, some glutamate residues at the C-terminus are monoglycylated but not polyglycylated due to the absence of functional TTLL10 in human. Monoglycylation is mainly limited to tubulin incorporated into cilia and flagella axonemes, which is required for their stability and maintenance. Flagella glycylation controls sperm motility. Both polyglutamylation and monoglycylation can coexist on the same protein on adjacent residues, and lowering glycylation levels increases polyglutamylation, and reciprocally.

It localises to the cytoplasm. It is found in the cytoskeleton. It catalyses the reaction GTP + H2O = GDP + phosphate + H(+). In terms of biological role, tubulin is the major constituent of microtubules, a cylinder consisting of laterally associated linear protofilaments composed of alpha- and beta-tubulin heterodimers. Microtubules grow by the addition of GTP-tubulin dimers to the microtubule end, where a stabilizing cap forms. Below the cap, tubulin dimers are in GDP-bound state, owing to GTPase activity of alpha-tubulin. This is Tubulin alpha chain-like 3 (TUBAL3) from Homo sapiens (Human).